A 174-amino-acid chain; its full sequence is MKVMTQFHERLRAQAETSQLAIRWRGLPARDRLALLWLGAFLLLVVLYLALWRPAERHLQSARQYFTEQRALHAYIQQQAPNVRQADAAAPQAQIDPAALQGMVTASAAQAGLSVERLDNEGEGAVQVALQPAPFAKLLPWLEQLNGQGVQVAEAGLDRQVDGRVSARLSLRVE.

Topologically, residues 1–32 are cytoplasmic; it reads MKVMTQFHERLRAQAETSQLAIRWRGLPARDR. A helical membrane pass occupies residues 33–52; it reads LALLWLGAFLLLVVLYLALW. Topologically, residues 53-174 are periplasmic; that stretch reads RPAERHLQSA…VSARLSLRVE (122 aa).

It belongs to the GSP M family. Type II secretion system is composed of four main components: the outer membrane complex, the inner membrane complex, the cytoplasmic secretion ATPase and the periplasm-spanning pseudopilus. Forms homodimers. Interacts with XcpY/GspL. Interacts with XcpR/GspE and XcpS/GspF.

Its subcellular location is the cell inner membrane. Its function is as follows. Inner membrane component of the type II secretion system required for the energy-dependent secretion of extracellular factors such as proteases and toxins from the periplasm. Plays a role in the complex assembly and recruits XcpY resulting in a stable complex in the inner membrane. Provides thus a link between the energy-providing XcpR protein in the cytoplasm and the rest of the T2SS machinery. This Pseudomonas aeruginosa (strain ATCC 15692 / DSM 22644 / CIP 104116 / JCM 14847 / LMG 12228 / 1C / PRS 101 / PAO1) protein is Type II secretion system protein M (xcpZ).